The sequence spans 503 residues: MTLGSPRKGLLMLLMALVTQGDPVKPSRGPLVTCTCESPHCKGPTCRGAWCTVVLVREEGRHPQEHRGCGNLHRELCRGRPTEFVNHYCCDSHLCNHNVSLVLEATQPPSEQPGTDGQLALILGPVLALLALVALGVLGLWHVRRRQEKQRGLHSELGESSLILKASEQGDSMLGDLLDSDCTTGSGSGLPFLVQRTVARQVALVECVGKGRYGEVWRGLWHGESVAVKIFSSRDEQSWFRETEIYNTVLLRHDNILGFIASDMTSRNSSTQLWLITHYHEHGSLYDFLQRQTLEPHLALRLAVSAACGLAHLHVEIFGTQGKPAIAHRDFKSRNVLVKSNLQCCIADLGLAVMHSQGSDYLDIGNNPRVGTKRYMAPEVLDEQIRTDCFESYKWTDIWAFGLVLWEIARRTIVNGIVEDYRPPFYDVVPNDPSFEDMKKVVCVDQQTPTIPNRLAADPVLSGLAQMMRECWYPNPSARLTALRIKKTLQKISNSPEKPKVIQ.

The N-terminal stretch at 1–21 (MTLGSPRKGLLMLLMALVTQG) is a signal peptide. The Extracellular segment spans residues 22–118 (DPVKPSRGPL…PSEQPGTDGQ (97 aa)). Disulfide bonds link Cys-34/Cys-51, Cys-36/Cys-41, and Cys-46/Cys-69. A mediates specificity for BMP ligand region spans residues 73-76 (HREL). 2 disulfide bridges follow: Cys-77–Cys-89 and Cys-90–Cys-95. Asn-98 is a glycosylation site (N-linked (GlcNAc...) asparagine). Residues 119–141 (LALILGPVLALLALVALGVLGLW) form a helical membrane-spanning segment. Over 142–503 (HVRRRQEKQR…NSPEKPKVIQ (362 aa)) the chain is Cytoplasmic. Residues Ser-155, Ser-160, and Ser-161 each carry the phosphoserine modification. The 30-residue stretch at 172 to 201 (SMLGDLLDSDCTTGSGSGLPFLVQRTVARQ) folds into the GS domain. Positions 202-492 (VALVECVGKG…LRIKKTLQKI (291 aa)) constitute a Protein kinase domain. ATP-binding positions include 208–216 (VGKGRYGEV) and Lys-229. Asp-330 functions as the Proton acceptor in the catalytic mechanism.

The protein belongs to the protein kinase superfamily. TKL Ser/Thr protein kinase family. TGFB receptor subfamily. Interacts with TSC22D1/TSC-22. Requires Mg(2+) as cofactor. The cofactor is Mn(2+).

The protein localises to the cell membrane. The catalysed reaction is L-threonyl-[receptor-protein] + ATP = O-phospho-L-threonyl-[receptor-protein] + ADP + H(+). It catalyses the reaction L-seryl-[receptor-protein] + ATP = O-phospho-L-seryl-[receptor-protein] + ADP + H(+). Its function is as follows. Type I receptor for TGF-beta family ligands BMP9/GDF2 and BMP10 and important regulator of normal blood vessel development. On ligand binding, forms a receptor complex consisting of two type II and two type I transmembrane serine/threonine kinases. Type II receptors phosphorylate and activate type I receptors which autophosphorylate, then bind and activate SMAD transcriptional regulators. May bind activin as well. The protein is Activin receptor type-1-like (ACVRL1) of Homo sapiens (Human).